The sequence spans 142 residues: Transcriptional regulator MraZ (142 aa).

SpoVT-AbrB domains are found at residues 5 to 46 and 75 to 118; these read THPV…DRSE and AAAQ…DSEA.

The protein belongs to the MraZ family. In terms of assembly, forms oligomers.

It localises to the cytoplasm. The protein localises to the nucleoid. The chain is Transcriptional regulator MraZ from Tropheryma whipplei (strain TW08/27) (Whipple's bacillus).